The sequence spans 68 residues: Large ribosomal subunit protein bL31 (68 aa).

C16, C18, C37, and C40 together coordinate Zn(2+).

This sequence belongs to the bacterial ribosomal protein bL31 family. Type A subfamily. Part of the 50S ribosomal subunit. Zn(2+) is required as a cofactor.

Functionally, binds the 23S rRNA. This chain is Large ribosomal subunit protein bL31, found in Acidithiobacillus ferrooxidans (strain ATCC 23270 / DSM 14882 / CIP 104768 / NCIMB 8455) (Ferrobacillus ferrooxidans (strain ATCC 23270)).